The chain runs to 261 residues: Cytochrome c oxidase subunit 3 (261 aa).

Topologically, residues 1 to 15 (MTNQLHPFHMTNPSP) are mitochondrial matrix. Residues 16–34 (WPLTGATAALLMTSGLIMW) traverse the membrane as a helical segment. Over 35 to 40 (FHYNSS) the chain is Mitochondrial intermembrane. A helical membrane pass occupies residues 41–66 (QLIMLGLLIMLLTLTQWWRDIVREST). Topologically, residues 67-72 (FQGHHT) are mitochondrial matrix. Residues 73-105 (PSVQNNLRYGMILFITSEILFFTGFFWAFYHSS) traverse the membrane as a helical segment. Topologically, residues 106 to 128 (LSPTAELGNIWPPTGITPLNPFE) are mitochondrial intermembrane. A helical membrane pass occupies residues 129–152 (VPLLNTAVLLASGVTITWAHHSLM). At 153–155 (EGN) the chain is on the mitochondrial matrix side. Residues 156 to 183 (RPQTLQALTLTIILGTYFTILQAMEYFE) form a helical membrane-spanning segment. At 184-190 (ASFTIAD) the chain is on the mitochondrial intermembrane side. A helical membrane pass occupies residues 191 to 223 (SIYGSTFFVATGFHGLHVIIGSTFLIVCLMRQL). The Mitochondrial matrix segment spans residues 224–232 (KYHFTSHHH). Residues 233–256 (FGFEAAAWYWHFVDVIWLFLYLSI) traverse the membrane as a helical segment. Topologically, residues 257–261 (YWWGS) are mitochondrial intermembrane.

The protein belongs to the cytochrome c oxidase subunit 3 family. As to quaternary structure, component of the cytochrome c oxidase (complex IV, CIV), a multisubunit enzyme composed of 14 subunits. The complex is composed of a catalytic core of 3 subunits MT-CO1, MT-CO2 and MT-CO3, encoded in the mitochondrial DNA, and 11 supernumerary subunits COX4I, COX5A, COX5B, COX6A, COX6B, COX6C, COX7A, COX7B, COX7C, COX8 and NDUFA4, which are encoded in the nuclear genome. The complex exists as a monomer or a dimer and forms supercomplexes (SCs) in the inner mitochondrial membrane with NADH-ubiquinone oxidoreductase (complex I, CI) and ubiquinol-cytochrome c oxidoreductase (cytochrome b-c1 complex, complex III, CIII), resulting in different assemblies (supercomplex SCI(1)III(2)IV(1) and megacomplex MCI(2)III(2)IV(2)).

It is found in the mitochondrion inner membrane. The catalysed reaction is 4 Fe(II)-[cytochrome c] + O2 + 8 H(+)(in) = 4 Fe(III)-[cytochrome c] + 2 H2O + 4 H(+)(out). Its function is as follows. Component of the cytochrome c oxidase, the last enzyme in the mitochondrial electron transport chain which drives oxidative phosphorylation. The respiratory chain contains 3 multisubunit complexes succinate dehydrogenase (complex II, CII), ubiquinol-cytochrome c oxidoreductase (cytochrome b-c1 complex, complex III, CIII) and cytochrome c oxidase (complex IV, CIV), that cooperate to transfer electrons derived from NADH and succinate to molecular oxygen, creating an electrochemical gradient over the inner membrane that drives transmembrane transport and the ATP synthase. Cytochrome c oxidase is the component of the respiratory chain that catalyzes the reduction of oxygen to water. Electrons originating from reduced cytochrome c in the intermembrane space (IMS) are transferred via the dinuclear copper A center (CU(A)) of subunit 2 and heme A of subunit 1 to the active site in subunit 1, a binuclear center (BNC) formed by heme A3 and copper B (CU(B)). The BNC reduces molecular oxygen to 2 water molecules using 4 electrons from cytochrome c in the IMS and 4 protons from the mitochondrial matrix. The polypeptide is Cytochrome c oxidase subunit 3 (MT-CO3) (Pelomedusa subrufa (African side-necked turtle)).